Consider the following 257-residue polypeptide: Pyridoxine 5'-phosphate synthase (257 aa).

N16 is a binding site for 3-amino-2-oxopropyl phosphate. Residue 18–19 (DH) coordinates 1-deoxy-D-xylulose 5-phosphate. R27 lines the 3-amino-2-oxopropyl phosphate pocket. Residue H52 is the Proton acceptor of the active site. R54 and H59 together coordinate 1-deoxy-D-xylulose 5-phosphate. The active-site Proton acceptor is E79. T109 contributes to the 1-deoxy-D-xylulose 5-phosphate binding site. H200 (proton donor) is an active-site residue. Residues G201 and 222 to 223 (GH) contribute to the 3-amino-2-oxopropyl phosphate site.

The protein belongs to the PNP synthase family. As to quaternary structure, homooctamer; tetramer of dimers.

Its subcellular location is the cytoplasm. The enzyme catalyses 3-amino-2-oxopropyl phosphate + 1-deoxy-D-xylulose 5-phosphate = pyridoxine 5'-phosphate + phosphate + 2 H2O + H(+). The protein operates within cofactor biosynthesis; pyridoxine 5'-phosphate biosynthesis; pyridoxine 5'-phosphate from D-erythrose 4-phosphate: step 5/5. In terms of biological role, catalyzes the complicated ring closure reaction between the two acyclic compounds 1-deoxy-D-xylulose-5-phosphate (DXP) and 3-amino-2-oxopropyl phosphate (1-amino-acetone-3-phosphate or AAP) to form pyridoxine 5'-phosphate (PNP) and inorganic phosphate. The chain is Pyridoxine 5'-phosphate synthase from Burkholderia pseudomallei (strain 1710b).